The chain runs to 460 residues: Exodeoxyribonuclease 7 large subunit (460 aa).

It belongs to the XseA family. As to quaternary structure, heterooligomer composed of large and small subunits.

The protein resides in the cytoplasm. It carries out the reaction Exonucleolytic cleavage in either 5'- to 3'- or 3'- to 5'-direction to yield nucleoside 5'-phosphates.. In terms of biological role, bidirectionally degrades single-stranded DNA into large acid-insoluble oligonucleotides, which are then degraded further into small acid-soluble oligonucleotides. The sequence is that of Exodeoxyribonuclease 7 large subunit from Edwardsiella ictaluri (strain 93-146).